A 629-amino-acid chain; its full sequence is MQYHDQFDVIVVGGGHAGTEAATAAARMGMKTLLLTHNIETLGHMSCNPAIGGIGKGHLVKEVDAMGGIMAQAIDHAGIQFRILNSSKGPAVRATRAQADRLLYKQTIRHTLENYPNLQLFQQACDDLILEGDRVCGVVTQAGIRILSKTVVLTAGTFLNGLIHIGMEHYRGGRSGDPASVTLAERMREMPLRVGRLKTGTPPRIDARSVDFSQLQMQLGDDPVPVFSYLGKPEQHPRQVPCFITHTNVQTHDVIRANLDRSPMYAGVIEGIGPRYCPSIEDKIMRFADKDAHQIFIEPEGLTTHELYPNGISTSLPFDVQVQIVRSMKGFANAHIARPGYAIEYDFFDPRDLKPNMENKCLQNLFFAGQINGTTGYEEAAAQGMLAGINAALRAQDKDPWAPRRDQAYIGVLMDDLSTLGTKEPYRMFTSRAEYRLLLREDNADLRLTPVGRELGLVNDERWAFFNHKLEMMAQEQQRLQDTWIQPQHPATEGLNKILKTPLSRPASLEDLLRRPEVNYQDLMAIEGVGPGIEHPQASEQIEIQVKYAGYIDRQQDEIDKQLRHEETLLPLDLDYSEVPGLSKEVCIKLNDTKPQTIGQASRISGVTPAAISILLVHLKKRGLLRKSA.

13 to 18 contacts FAD; it reads GGGHAG. Residue 273–287 coordinates NAD(+); that stretch reads GPRYCPSIEDKIMRF.

Belongs to the MnmG family. Homodimer. Heterotetramer of two MnmE and two MnmG subunits. It depends on FAD as a cofactor.

Its subcellular location is the cytoplasm. Functionally, NAD-binding protein involved in the addition of a carboxymethylaminomethyl (cmnm) group at the wobble position (U34) of certain tRNAs, forming tRNA-cmnm(5)s(2)U34. This is tRNA uridine 5-carboxymethylaminomethyl modification enzyme MnmG from Tolumonas auensis (strain DSM 9187 / NBRC 110442 / TA 4).